The following is a 1175-amino-acid chain: uncharacterized protein (1175 aa).

586–593 (GPAGTGKT) provides a ligand contact to ATP.

This is an uncharacterized protein from Methanocaldococcus jannaschii (strain ATCC 43067 / DSM 2661 / JAL-1 / JCM 10045 / NBRC 100440) (Methanococcus jannaschii).